A 293-amino-acid chain; its full sequence is 4-hydroxy-tetrahydrodipicolinate synthase (293 aa).

A pyruvate-binding site is contributed by Thr45. Catalysis depends on Tyr133, which acts as the Proton donor/acceptor. Lys162 serves as the catalytic Schiff-base intermediate with substrate. Ile204 contacts pyruvate.

It belongs to the DapA family. In terms of assembly, homotetramer; dimer of dimers.

It is found in the cytoplasm. The enzyme catalyses L-aspartate 4-semialdehyde + pyruvate = (2S,4S)-4-hydroxy-2,3,4,5-tetrahydrodipicolinate + H2O + H(+). It participates in amino-acid biosynthesis; L-lysine biosynthesis via DAP pathway; (S)-tetrahydrodipicolinate from L-aspartate: step 3/4. In terms of biological role, catalyzes the condensation of (S)-aspartate-beta-semialdehyde [(S)-ASA] and pyruvate to 4-hydroxy-tetrahydrodipicolinate (HTPA). This is 4-hydroxy-tetrahydrodipicolinate synthase from Chelativorans sp. (strain BNC1).